A 1112-amino-acid chain; its full sequence is Mediator of RNA polymerase II transcription subunit 14 (1112 aa).

Disordered stretches follow at residues 1–76 (MPGV…INES), 120–141 (SPHGQMPSTPANGKAPGDQSPE), and 1088–1112 (TNSAGARSSQQCDAPPEAADVITID). The span at 20–39 (SPDNVSSTPFPQERVNQSGD) shows a compositional bias: polar residues. Over residues 64–73 (IETHTGKDGI) the composition is skewed to basic and acidic residues. Positions 1088–1099 (TNSAGARSSQQC) are enriched in polar residues.

The protein belongs to the Mediator complex subunit 14 family. In terms of assembly, component of the Mediator complex.

The protein localises to the nucleus. Its function is as follows. Component of the Mediator complex, a coactivator involved in the regulated transcription of nearly all RNA polymerase II-dependent genes. Mediator functions as a bridge to convey information from gene-specific regulatory proteins to the basal RNA polymerase II transcription machinery. Mediator is recruited to promoters by direct interactions with regulatory proteins and serves as a scaffold for the assembly of a functional preinitiation complex with RNA polymerase II and the general transcription factors. In Aspergillus clavatus (strain ATCC 1007 / CBS 513.65 / DSM 816 / NCTC 3887 / NRRL 1 / QM 1276 / 107), this protein is Mediator of RNA polymerase II transcription subunit 14 (rgr1).